Reading from the N-terminus, the 488-residue chain is GTPase Der (488 aa).

The 164-residue stretch at 3-166 (PVVALVGRPN…YALAPYAEAL (164 aa)) folds into the EngA-type G 1 domain. Residues 9 to 16 (GRPNVGKS), 56 to 60 (DTGGI), and 118 to 121 (NKVD) each bind GTP. Positions 168–192 (LNRDGDDEEEKEEREYTEEEAEAEQ) are disordered. The span at 172 to 190 (GDDEEEKEEREYTEEEAEA) shows a compositional bias: acidic residues. Positions 200–373 (IKLAVIGKPN…SVQEAYESAT (174 aa)) constitute an EngA-type G 2 domain. GTP is bound by residues 206–213 (GKPNVGKS), 253–257 (DTAGV), and 318–321 (NKWD). One can recognise a KH-like domain in the interval 374 to 458 (RRVSTSMLTR…PIQVRFQDGD (85 aa)).

The protein belongs to the TRAFAC class TrmE-Era-EngA-EngB-Septin-like GTPase superfamily. EngA (Der) GTPase family. Associates with the 50S ribosomal subunit.

GTPase that plays an essential role in the late steps of ribosome biogenesis. The chain is GTPase Der from Shewanella woodyi (strain ATCC 51908 / MS32).